The following is a 351-amino-acid chain: Mitochondrial mRNA pseudouridine synthase RPUSD3 (351 aa).

The transit peptide at methionine 1–glycine 25 directs the protein to the mitochondrion. The tract at residues glutamate 33 to glycine 58 is disordered. Residue serine 71 is modified to Phosphoserine.

The protein belongs to the pseudouridine synthase RluA family. Forms a regulatory protein-RNA complex, consisting of RCC1L, NGRN, RPUSD3, RPUSD4, TRUB2, FASTKD2 and 16S mt-rRNA.

Its subcellular location is the mitochondrion matrix. It catalyses the reaction a uridine in mRNA = a pseudouridine in mRNA. In terms of biological role, catalyzes uridine to pseudouridine isomerization (pseudouridylation) of specific mitochondrial mRNAs (mt-mRNAs), a post-transcriptional modification necessary for their translation. Acts at position 390 in COXI mt-mRNA and at position 697-699 in mitochondrial COXIII mt-mRNA. As a component of a functional protein-RNA module, consisting of RCC1L, NGRN, RPUSD3, RPUSD4, TRUB2, FASTKD2 and 16S mitochondrial ribosomal RNA (16S mt-rRNA), controls 16S mt-rRNA abundance and may play a role in mitochondrial ribosome biogenesis. The polypeptide is Mitochondrial mRNA pseudouridine synthase RPUSD3 (Homo sapiens (Human)).